We begin with the raw amino-acid sequence, 357 residues long: Peptide chain release factor 1 (357 aa).

N5-methylglutamine is present on Q234. Residues 249-308 are disordered; sequence PSGVEVSCQDEKSQHKNRSKAMRVLRSRVYEKKREEQQAEREEARRSMVGSGDRSAKIRT. Over residues 263 to 274 the composition is skewed to basic residues; it reads HKNRSKAMRVLR. The segment covering 276–294 has biased composition (basic and acidic residues); sequence RVYEKKREEQQAEREEARR.

This sequence belongs to the prokaryotic/mitochondrial release factor family. Post-translationally, methylated by PrmC. Methylation increases the termination efficiency of RF1.

It localises to the cytoplasm. Peptide chain release factor 1 directs the termination of translation in response to the peptide chain termination codons UAG and UAA. In Salinibacter ruber (strain DSM 13855 / M31), this protein is Peptide chain release factor 1.